Consider the following 142-residue polypeptide: Holo-[acyl-carrier-protein] synthase (142 aa).

Residues Asp-8 and Glu-57 each coordinate Mg(2+).

It belongs to the P-Pant transferase superfamily. AcpS family. The cofactor is Mg(2+).

The protein localises to the cytoplasm. It carries out the reaction apo-[ACP] + CoA = holo-[ACP] + adenosine 3',5'-bisphosphate + H(+). Its function is as follows. Transfers the 4'-phosphopantetheine moiety from coenzyme A to a Ser of acyl-carrier-protein. The sequence is that of Holo-[acyl-carrier-protein] synthase from Ruegeria sp. (strain TM1040) (Silicibacter sp.).